Consider the following 493-residue polypeptide: MWSRRQGRLRPTVCGVEELRRRRREREAALRKARREQQLVSKRLLRNDAPEEAGEGCVAAILGETEVQQFLRQAQRGTEEKEREGALVSLRRGLQHPETQQTFIRLEGSMRTLVGLLTSNQALLQLEAARCLHELSHSEQSTVAEACLPATSYLLTYLSSHSSDFIELCLYTLGNLIVESEAVRRQLLPQGIVPALAACIQSPHVAVLEALGYALSQLLQAEEAPEKIIPSILASTLPQHMLQMLQPGPKLNPGVAVEFAWCLHYIICSQVSNPLLIGHGALSTLGLLLLDLAGAVQKTEDAGLELLACPVLRCLSNLLTEAAVETVGGQMQLRDERVVAALFILLQFFFQKQPSLLPEGLWLLNNLTANSPSFCTSLLSLDLIEPLLQLLPVSNVVSVMVLTVLCNVAEKGPAYCQRLWPGPLLPALLHTLAFSDTEVVGQSLELLHLLFLYQPEAVQVFLQQSGLQALERHQEEAQLQDRVYALQQTALQG.

Positions 15 to 84 (GVEELRRRRR…QRGTEEKERE (70 aa)) form a coiled coil. 2 helical membrane passes run 338-358 (VVAALFILLQFFFQKQPSLLP) and 386-406 (PLLQLLPVSNVVSVMVLTVLC).

It is found in the membrane. The protein is Transmembrane and coiled-coil domain-containing protein 6 (TMCO6) of Homo sapiens (Human).